The following is a 427-amino-acid chain: Tyrosine--tRNA ligase (427 aa).

Tyrosine 33 is an L-tyrosine binding site. A 'HIGH' region motif is present at residues 38–47 (PTAPSLHVGN). Residues tyrosine 168 and glutamine 172 each coordinate L-tyrosine. Positions 228–232 (KFGKS) match the 'KMSKS' region motif. An ATP-binding site is contributed by lysine 231. Residues 358–426 (EHMLDLVAST…GKKHHYLIKV (69 aa)) form the S4 RNA-binding domain.

It belongs to the class-I aminoacyl-tRNA synthetase family. TyrS type 1 subfamily. Homodimer.

Its subcellular location is the cytoplasm. The enzyme catalyses tRNA(Tyr) + L-tyrosine + ATP = L-tyrosyl-tRNA(Tyr) + AMP + diphosphate + H(+). In terms of biological role, catalyzes the attachment of tyrosine to tRNA(Tyr) in a two-step reaction: tyrosine is first activated by ATP to form Tyr-AMP and then transferred to the acceptor end of tRNA(Tyr). In Amoebophilus asiaticus (strain 5a2), this protein is Tyrosine--tRNA ligase.